Consider the following 636-residue polypeptide: Dehydrogenase ARMGADRAFT_1018426 (636 aa).

An N-terminal signal peptide occupies residues 1–19 (MPALTYLLLAAIGASTVHS). Residues 49–50 (TA) and 70–71 (EG) contribute to the FAD site. Residue Asn-99 is glycosylated (N-linked (GlcNAc...) asparagine). FAD-binding positions include Trp-104 and 134–137 (NGLT). Asn-253 carries N-linked (GlcNAc...) asparagine glycosylation. An FAD-binding site is contributed by Val-280. N-linked (GlcNAc...) asparagine glycans are attached at residues Asn-333, Asn-380, Asn-394, and Asn-498. The Proton acceptor role is filled by His-570. FAD contacts are provided by residues Ala-603 and 614–615 (PS).

It belongs to the GMC oxidoreductase family. It depends on FAD as a cofactor.

It functions in the pathway secondary metabolite biosynthesis. In terms of biological role, dehydrogenase, part of the gene cluster that mediates the biosynthesis of melleolides, a range of antifungal and phytotoxic polyketide derivatives composed of an orsellinic acid (OA) moiety esterified to various sesquiterpene alcohols. The first step in melleolides biosynthesis is performed by the delta(6)-protoilludene synthase PRO1 which catalyzes the cyclization of farnesyl diphosphate to protoilludene. The orsellinic acid synthase armB produces OA by condensing acetyl-CoA with 3 malonyl-CoA units in a three-round chain elongation reaction folowed by a C2-C7 ring closure. ArmB further catalyzes the trans-esterification of OA to the various sesquiterpene alcohols resulting from the hydroxylation of protoilludene. The melleolides cluster also includes 5 cytochrome P450 monooxygenases, 4 NAD(+)-dependent oxidoreductases, one flavin-dependent oxidoreductase, and one O-methyltransferase. The cytochrome P450 monooxygenases may be involved in protoilludene hydroxylation to elaborate melleolides with multiple alcohol groups, such as melleolide D, which carries alcohol functionalities at C-4, C-5, C-10, and C-13. The role of the NAD(+)-dependent enzymes remains unknown. Numerous melleolides, including arnamial, show 5'-O-methylation of the aromatic moiety which may be catalyzed by the methyltransferase encoded in the cluster. The flavin-dependent oxidoreductase might represent the dehydrogenase yielding the aldehyde in position 1 of arnamial and other melleolides. Finally, several halogenase localized outside of the cluster, are able to catalyze the transfer of a single chlorine atom to the melleolide backbone, resulting in a 6'-chloromelleolide product. The protein is Dehydrogenase ARMGADRAFT_1018426 of Armillaria gallica (Bulbous honey fungus).